A 444-amino-acid chain; its full sequence is ATP-dependent protease ATPase subunit HslU (444 aa).

ATP-binding positions include Ile-18, 60–65 (GVGKTE), Asp-257, Glu-322, and Arg-394.

It belongs to the ClpX chaperone family. HslU subfamily. As to quaternary structure, a double ring-shaped homohexamer of HslV is capped on each side by a ring-shaped HslU homohexamer. The assembly of the HslU/HslV complex is dependent on binding of ATP.

Its subcellular location is the cytoplasm. Functionally, ATPase subunit of a proteasome-like degradation complex; this subunit has chaperone activity. The binding of ATP and its subsequent hydrolysis by HslU are essential for unfolding of protein substrates subsequently hydrolyzed by HslV. HslU recognizes the N-terminal part of its protein substrates and unfolds these before they are guided to HslV for hydrolysis. The sequence is that of ATP-dependent protease ATPase subunit HslU from Psychromonas ingrahamii (strain DSM 17664 / CCUG 51855 / 37).